Consider the following 227-residue polypeptide: PKHD-type hydroxylase Bxeno_B2194 (227 aa).

The 101-residue stretch at 78 to 178 (KVFPPLFNRY…RVASFFWIQS (101 aa)) folds into the Fe2OG dioxygenase domain. Residues H96, D98, and H159 each contribute to the Fe cation site. Residue R169 coordinates 2-oxoglutarate.

The cofactor is Fe(2+). L-ascorbate is required as a cofactor.

This is PKHD-type hydroxylase Bxeno_B2194 from Paraburkholderia xenovorans (strain LB400).